Reading from the N-terminus, the 382-residue chain is Biotin synthase (382 aa).

A Radical SAM core domain is found at 83-318 (CCGNVVDLCS…EQILRYAGGR (236 aa)). C101, C105, and C108 together coordinate [4Fe-4S] cluster. Residues C146, C183, C243, and R313 each coordinate [2Fe-2S] cluster.

It belongs to the radical SAM superfamily. Biotin synthase family. As to quaternary structure, homodimer. [4Fe-4S] cluster serves as cofactor. It depends on [2Fe-2S] cluster as a cofactor.

The enzyme catalyses (4R,5S)-dethiobiotin + (sulfur carrier)-SH + 2 reduced [2Fe-2S]-[ferredoxin] + 2 S-adenosyl-L-methionine = (sulfur carrier)-H + biotin + 2 5'-deoxyadenosine + 2 L-methionine + 2 oxidized [2Fe-2S]-[ferredoxin]. The protein operates within cofactor biosynthesis; biotin biosynthesis; biotin from 7,8-diaminononanoate: step 2/2. In terms of biological role, catalyzes the conversion of dethiobiotin (DTB) to biotin by the insertion of a sulfur atom into dethiobiotin via a radical-based mechanism. The polypeptide is Biotin synthase (Crocosphaera subtropica (strain ATCC 51142 / BH68) (Cyanothece sp. (strain ATCC 51142))).